The chain runs to 274 residues: MDLFMSIFTLGAITRQPAKIENASPASTVHATATIPLQASLPFGWLVVGVALLAVFQSASKVIALHKRWQLALHKGIQLVCNLLLLFVTIYSHLLLLAAGMEAQFLYIYALIYILQIVSFCRFIMRCWLCWKCRSKNPLLYDANYFVCWHTNCFDYCIPYNSITDTIVLTSGDGTTQPKLKEDYQIGGYSEDWHSGVKDYVVIHGYFTEVYYQLESTQLSTDTGAENATFFIYSKLVKDVDHVQIHTIDGSSGVVNPAMDPIYDEPTTTTSVPL.

Topologically, residues 1–34 (MDLFMSIFTLGAITRQPAKIENASPASTVHATAT) are extracellular. An O-linked (GalNAc...) serine; by host glycan is attached at Ser-27. O-linked (GalNAc...) threonine; by host glycosylation is found at Thr-28, Thr-32, and Thr-34. Positions 33 to 141 (ATIPLQASLP…KCRSKNPLLY (109 aa)) constitute a CoV 3a-like viroporin TM domain. A helical transmembrane segment spans residues 35-55 (IPLQASLPFGWLVVGVALLAV). The Cytoplasmic segment spans residues 56–78 (FQSASKVIALHKRWQLALHKGIQ). Residues 79 to 99 (LVCNLLLLFVTIYSHLLLLAA) traverse the membrane as a helical segment. The Extracellular portion of the chain corresponds to 100–104 (GMEAQ). Residues 105–125 (FLYIYALIYILQIVSFCRFIM) form a helical membrane-spanning segment. The Cytoplasmic segment spans residues 126 to 274 (RCWLCWKCRS…EPTTTTSVPL (149 aa)). Positions 145–237 (YFVCWHTNCF…ATFFIYSKLV (93 aa)) constitute a CoV 3a-like viroporin CD domain.

Homotetramer composed of two homodimers linked non covalently. Interacts with M, S and E proteins. Also interacts with the accessory protein 7a. Exists in both O-glycosylated and non-glycosylated forms. The glycosylated form is associated with the virion.

It is found in the virion. The protein resides in the host Golgi apparatus membrane. It localises to the host cell membrane. Its subcellular location is the secreted. The protein localises to the host cytoplasm. Forms homotetrameric potassium sensitive ion channels (viroporin) and may modulate virus release. Up-regulates expression of fibrinogen subunits FGA, FGB and FGG in host lung epithelial cells. Induces apoptosis in cell culture. Down-regulates the type 1 interferon receptor by inducing serine phosphorylation within the IFN alpha-receptor subunit 1 (IFNAR1) degradation motif and increasing IFNAR1 ubiquitination. This Rhinolophus ferrumequinum (Greater horseshoe bat) protein is Protein 3.